Reading from the N-terminus, the 245-residue chain is tRNA (guanine-N(7)-)-methyltransferase (245 aa).

Glutamate 75, glutamate 100, aspartate 127, and aspartate 150 together coordinate S-adenosyl-L-methionine. Aspartate 150 is an active-site residue. Substrate is bound by residues lysine 154, aspartate 186, and 223-226 (TKFE).

It belongs to the class I-like SAM-binding methyltransferase superfamily. TrmB family.

The catalysed reaction is guanosine(46) in tRNA + S-adenosyl-L-methionine = N(7)-methylguanosine(46) in tRNA + S-adenosyl-L-homocysteine. It participates in tRNA modification; N(7)-methylguanine-tRNA biosynthesis. Functionally, catalyzes the formation of N(7)-methylguanine at position 46 (m7G46) in tRNA. This chain is tRNA (guanine-N(7)-)-methyltransferase, found in Photobacterium profundum (strain SS9).